We begin with the raw amino-acid sequence, 488 residues long: Ribulose bisphosphate carboxylase large chain 1 (488 aa).

The substrate site is built by Asn128 and Thr178. Lys180 (proton acceptor) is an active-site residue. Lys182 contacts substrate. Residues Lys206, Asp208, and Glu209 each coordinate Mg(2+). Residue Lys206 is modified to N6-carboxylysine. His298 acts as the Proton acceptor in catalysis. Arg299, His331, and Ser383 together coordinate substrate.

The protein belongs to the RuBisCO large chain family. Type I subfamily. As to quaternary structure, heterohexadecamer of 8 large chains and 8 small chains. Mg(2+) serves as cofactor.

The catalysed reaction is 2 (2R)-3-phosphoglycerate + 2 H(+) = D-ribulose 1,5-bisphosphate + CO2 + H2O. It catalyses the reaction D-ribulose 1,5-bisphosphate + O2 = 2-phosphoglycolate + (2R)-3-phosphoglycerate + 2 H(+). Functionally, ruBisCO catalyzes two reactions: the carboxylation of D-ribulose 1,5-bisphosphate, the primary event in carbon dioxide fixation, as well as the oxidative fragmentation of the pentose substrate. Both reactions occur simultaneously and in competition at the same active site. The sequence is that of Ribulose bisphosphate carboxylase large chain 1 from Nitrobacter hamburgensis (strain DSM 10229 / NCIMB 13809 / X14).